Reading from the N-terminus, the 600-residue chain is DDB1- and CUL4-associated factor 8-like protein 1 (600 aa).

Residues 1–122 are disordered; that stretch reads MSHQEGSTGG…EEEQPRMCPR (122 aa). Acidic residues-rich tracts occupy residues 74 to 83 and 96 to 115; these read SSSEDVELES and EETE…EEEE. WD repeat units follow at residues 194–233, 237–278, 284–324, 332–372, 388–427, 435–475, and 479–518; these read SHAG…PVLN, GHDI…YCEN, KHRG…PASK, DKKV…KKEN, DFPT…GAQY, RNND…IIQF, and DRGD…ATEL. A disordered region spans residues 562–600; the sequence is PGWRDHGAEFPDEEELDESSSTSDTSEEEGQDRVQCIPS.

Belongs to the WD repeat DCAF8 family.

The polypeptide is DDB1- and CUL4-associated factor 8-like protein 1 (DCAF8L1) (Homo sapiens (Human)).